We begin with the raw amino-acid sequence, 206 residues long: GTP cyclohydrolase 1 (206 aa).

Zn(2+)-binding residues include cysteine 95, histidine 98, and cysteine 166.

This sequence belongs to the GTP cyclohydrolase I family. Toroid-shaped homodecamer, composed of two pentamers of five dimers.

The catalysed reaction is GTP + H2O = 7,8-dihydroneopterin 3'-triphosphate + formate + H(+). It functions in the pathway cofactor biosynthesis; 7,8-dihydroneopterin triphosphate biosynthesis; 7,8-dihydroneopterin triphosphate from GTP: step 1/1. The polypeptide is GTP cyclohydrolase 1 (Bartonella quintana (strain Toulouse) (Rochalimaea quintana)).